The primary structure comprises 211 residues: Protein-L-isoaspartate O-methyltransferase 2 (211 aa).

S60 is a catalytic residue.

This sequence belongs to the methyltransferase superfamily. L-isoaspartyl/D-aspartyl protein methyltransferase family.

It is found in the cytoplasm. The enzyme catalyses [protein]-L-isoaspartate + S-adenosyl-L-methionine = [protein]-L-isoaspartate alpha-methyl ester + S-adenosyl-L-homocysteine. Catalyzes the methyl esterification of L-isoaspartyl residues in peptides and proteins that result from spontaneous decomposition of normal L-aspartyl and L-asparaginyl residues. It plays a role in the repair and/or degradation of damaged proteins. The sequence is that of Protein-L-isoaspartate O-methyltransferase 2 from Nitrosospira multiformis (strain ATCC 25196 / NCIMB 11849 / C 71).